The chain runs to 214 residues: NADH-quinone oxidoreductase subunit C (214 aa).

Belongs to the complex I 30 kDa subunit family. NDH-1 is composed of 14 different subunits. Subunits NuoB, C, D, E, F, and G constitute the peripheral sector of the complex.

The protein localises to the cell inner membrane. The catalysed reaction is a quinone + NADH + 5 H(+)(in) = a quinol + NAD(+) + 4 H(+)(out). Its function is as follows. NDH-1 shuttles electrons from NADH, via FMN and iron-sulfur (Fe-S) centers, to quinones in the respiratory chain. The immediate electron acceptor for the enzyme in this species is believed to be ubiquinone. Couples the redox reaction to proton translocation (for every two electrons transferred, four hydrogen ions are translocated across the cytoplasmic membrane), and thus conserves the redox energy in a proton gradient. The protein is NADH-quinone oxidoreductase subunit C of Francisella tularensis subsp. mediasiatica (strain FSC147).